A 505-amino-acid chain; its full sequence is Protein disulfide-isomerase A3 (505 aa).

An N-terminal signal peptide occupies residues 1 to 24 (MSVPRPSRAALLLLVPLLALSAGA). Thioredoxin domains lie at 25 to 131 (SDVV…KQAG) and 341 to 483 (SRDG…REAT). Catalysis depends on nucleophile residues Cys-55 and Cys-58. Cystine bridges form between Cys-55/Cys-58, Cys-83/Cys-90, and Cys-404/Cys-407. Active-site nucleophile residues include Cys-404 and Cys-407. Residues 486 to 505 (PVLQEEDKAKKSKKKAKEDL) are disordered. The segment covering 495 to 505 (KKSKKKAKEDL) has biased composition (basic residues). The short motif at 502-505 (KEDL) is the Prevents secretion from ER element.

This sequence belongs to the protein disulfide isomerase family.

It is found in the endoplasmic reticulum. The protein resides in the endoplasmic reticulum lumen. It localises to the melanosome. The enzyme catalyses Catalyzes the rearrangement of -S-S- bonds in proteins.. Its function is as follows. Protein disulfide isomerase that catalyzes the formation, isomerization, and reduction or oxidation of disulfide bonds in client proteins and functions as a protein folding chaperone. This is Protein disulfide-isomerase A3 (PDIA3) from Gallus gallus (Chicken).